Here is a 266-residue protein sequence, read N- to C-terminus: Glucosamine-6-phosphate deaminase (266 aa).

The Proton acceptor; for enolization step role is filled by Asp72. Asp141 acts as the For ring-opening step in catalysis. His143 functions as the Proton acceptor; for ring-opening step in the catalytic mechanism. The active-site For ring-opening step is Glu148.

Belongs to the glucosamine/galactosamine-6-phosphate isomerase family. NagB subfamily. In terms of assembly, homohexamer; trimer of disulfide-linked dimers.

It carries out the reaction alpha-D-glucosamine 6-phosphate + H2O = beta-D-fructose 6-phosphate + NH4(+). It participates in amino-sugar metabolism; N-acetylneuraminate degradation; D-fructose 6-phosphate from N-acetylneuraminate: step 5/5. Its activity is regulated as follows. Allosterically activated by N-acetylglucosamine 6-phosphate (GlcNAc6P). Functionally, catalyzes the reversible isomerization-deamination of glucosamine 6-phosphate (GlcN6P) to form fructose 6-phosphate (Fru6P) and ammonium ion. The chain is Glucosamine-6-phosphate deaminase from Vibrio parahaemolyticus serotype O3:K6 (strain RIMD 2210633).